The primary structure comprises 723 residues: Malate synthase G (723 aa).

Residues V118, 125 to 126 (RY), S274, and R311 each bind acetyl-CoA. R338 acts as the Proton acceptor in catalysis. Glyoxylate contacts are provided by residues R338, E427, and 452–455 (GFLD). Residues E427 and D455 each coordinate Mg(2+). P536 is an acetyl-CoA binding site. The residue at position 617 (C617) is a Cysteine sulfenic acid (-SOH). The Proton donor role is filled by D631. C688 carries the post-translational modification Cysteine sulfenic acid (-SOH).

Belongs to the malate synthase family. GlcB subfamily. Monomer. Mg(2+) serves as cofactor.

Its subcellular location is the cytoplasm. The enzyme catalyses glyoxylate + acetyl-CoA + H2O = (S)-malate + CoA + H(+). It functions in the pathway carbohydrate metabolism; glyoxylate cycle; (S)-malate from isocitrate: step 2/2. Involved in the glycolate utilization. Catalyzes the condensation and subsequent hydrolysis of acetyl-coenzyme A (acetyl-CoA) and glyoxylate to form malate and CoA. In Shigella flexneri, this protein is Malate synthase G.